Consider the following 201-residue polypeptide: Putative 3-methyladenine DNA glycosylase (201 aa).

This sequence belongs to the DNA glycosylase MPG family.

This is Putative 3-methyladenine DNA glycosylase from Clostridium novyi (strain NT).